The primary structure comprises 205 residues: Molybdenum cofactor guanylyltransferase (205 aa).

GTP contacts are provided by residues 14–16 (LAG), Lys-27, Asp-77, and Asp-107. Asp-107 is a binding site for Mg(2+).

Belongs to the MobA family. As to quaternary structure, monomer. Mg(2+) is required as a cofactor.

Its subcellular location is the cytoplasm. The catalysed reaction is Mo-molybdopterin + GTP + H(+) = Mo-molybdopterin guanine dinucleotide + diphosphate. Transfers a GMP moiety from GTP to Mo-molybdopterin (Mo-MPT) cofactor (Moco or molybdenum cofactor) to form Mo-molybdopterin guanine dinucleotide (Mo-MGD) cofactor. This chain is Molybdenum cofactor guanylyltransferase, found in Burkholderia ambifaria (strain ATCC BAA-244 / DSM 16087 / CCUG 44356 / LMG 19182 / AMMD) (Burkholderia cepacia (strain AMMD)).